The following is a 130-amino-acid chain: Small ribosomal subunit protein uS8 (130 aa).

This sequence belongs to the universal ribosomal protein uS8 family. Part of the 30S ribosomal subunit. Contacts proteins S5 and S12.

Functionally, one of the primary rRNA binding proteins, it binds directly to 16S rRNA central domain where it helps coordinate assembly of the platform of the 30S subunit. The sequence is that of Small ribosomal subunit protein uS8 from Klebsiella pneumoniae subsp. pneumoniae (strain ATCC 700721 / MGH 78578).